The following is a 469-amino-acid chain: 6-phospho-beta-galactosidase (469 aa).

Residues Q18, H115, N158, E159, and N296 each contribute to the D-galactose 6-phosphate site. The active-site Proton donor is the E159. E374 serves as the catalytic Nucleophile. Residues S429, W430, K436, and Y438 each coordinate D-galactose 6-phosphate.

It belongs to the glycosyl hydrolase 1 family.

It carries out the reaction a 6-phospho-beta-D-galactoside + H2O = D-galactose 6-phosphate + an alcohol. Its pathway is carbohydrate metabolism; lactose degradation; D-galactose 6-phosphate and beta-D-glucose from lactose 6-phosphate: step 1/1. The chain is 6-phospho-beta-galactosidase from Staphylococcus haemolyticus (strain JCSC1435).